The chain runs to 80 residues: Large ribosomal subunit protein uL24 (80 aa).

The protein belongs to the universal ribosomal protein uL24 family. Part of the 50S ribosomal subunit.

In terms of biological role, one of two assembly initiator proteins, it binds directly to the 5'-end of the 23S rRNA, where it nucleates assembly of the 50S subunit. Its function is as follows. One of the proteins that surrounds the polypeptide exit tunnel on the outside of the subunit. The sequence is that of Large ribosomal subunit protein uL24 from Prosthecochloris aestuarii (strain DSM 271 / SK 413).